Reading from the N-terminus, the 1833-residue chain is Proteasome activator complex subunit 4A (1833 aa).

HEAT repeat units lie at residues 460-504 and 983-1022; these read PEGP…LVDC and NFCC…NHSG. The segment at 1095–1122 is disordered; sequence SSSPEPNPGAASEQEELEGRKREEQKNK. Positions 1111 to 1122 are enriched in basic and acidic residues; sequence LEGRKREEQKNK. HEAT repeat units follow at residues 1164–1202, 1344–1382, 1626–1664, and 1670–1708; these read LPLP…QLKR, DAFL…GSKH, SDQI…YNLF, and AKAV…CNFL. The tract at residues 1640 to 1728 is bromodomain-like (BRDL); the sequence is SRSSSWHARY…ESLSKTRLPK (89 aa).

The protein belongs to the BLM10 family. Homodimer. Interacts with the 20S and 26S proteasomes.

The protein localises to the cytoplasm. Its subcellular location is the cytosol. The protein resides in the nucleus. It is found in the nucleus speckle. Its function is as follows. Associated component of the proteasome that specifically recognizes acetylated histones and promotes ATP- and ubiquitin-independent degradation of core histones during DNA damage response. Recognizes and binds acetylated histones via its bromodomain-like (BRDL) region and activates the proteasome by opening the gated channel for substrate entry. Binds to the core proteasome via its C-terminus, which occupies the same binding sites as the proteasomal ATPases, opening the closed structure of the proteasome via an active gating mechanism. involved in DNA damage response in somatic cells: binds to acetylated histones and promotes degradation of histones. In Danio rerio (Zebrafish), this protein is Proteasome activator complex subunit 4A (psme4a).